Here is a 988-residue protein sequence, read N- to C-terminus: Mediator of RNA polymerase II transcription subunit 24 (988 aa).

6 short sequence motifs (LXXLL motif) span residues 128 to 132 (LNWLL), 341 to 345 (LTPLL), 445 to 449 (LDLLL), 555 to 559 (LVALL), 786 to 790 (LPSLL), and 856 to 860 (LMRLL).

It belongs to the Mediator complex subunit 24 family. Component of the Mediator complex.

It is found in the nucleus. Functionally, component of the Mediator complex, a coactivator involved in the regulated transcription of nearly all RNA polymerase II-dependent genes. Mediator functions as a bridge to convey information from gene-specific regulatory proteins to the basal RNA polymerase II transcription machinery. Mediator is recruited to promoters by direct interactions with regulatory proteins and serves as a scaffold for the assembly of a functional preinitiation complex with RNA polymerase II and the general transcription factors. The chain is Mediator of RNA polymerase II transcription subunit 24 (med24) from Xenopus laevis (African clawed frog).